The following is a 444-amino-acid chain: Phosphoglucosamine mutase (444 aa).

S104 acts as the Phosphoserine intermediate in catalysis. 4 residues coordinate Mg(2+): S104, D243, D245, and D247. At S104 the chain carries Phosphoserine.

The protein belongs to the phosphohexose mutase family. The cofactor is Mg(2+). Activated by phosphorylation.

The enzyme catalyses alpha-D-glucosamine 1-phosphate = D-glucosamine 6-phosphate. Its function is as follows. Catalyzes the conversion of glucosamine-6-phosphate to glucosamine-1-phosphate. The sequence is that of Phosphoglucosamine mutase from Neisseria meningitidis serogroup B (strain ATCC BAA-335 / MC58).